We begin with the raw amino-acid sequence, 125 residues long: Protein ApaG (125 aa).

In terms of domain architecture, ApaG spans 1-125 (MIDAPRIIVQ…FRLAIPSLIN (125 aa)).

This is Protein ApaG from Edwardsiella ictaluri (strain 93-146).